A 221-amino-acid chain; its full sequence is Phosphoribosylformylglycinamidine synthase subunit PurQ (221 aa).

In terms of domain architecture, Glutamine amidotransferase type-1 spans 5–221; the sequence is TVGIVVFPGS…LYTLRSLITQ (217 aa). Catalysis depends on C89, which acts as the Nucleophile. Active-site residues include H197 and E199.

As to quaternary structure, part of the FGAM synthase complex composed of 1 PurL, 1 PurQ and 2 PurS subunits.

The protein localises to the cytoplasm. The enzyme catalyses N(2)-formyl-N(1)-(5-phospho-beta-D-ribosyl)glycinamide + L-glutamine + ATP + H2O = 2-formamido-N(1)-(5-O-phospho-beta-D-ribosyl)acetamidine + L-glutamate + ADP + phosphate + H(+). The catalysed reaction is L-glutamine + H2O = L-glutamate + NH4(+). The protein operates within purine metabolism; IMP biosynthesis via de novo pathway; 5-amino-1-(5-phospho-D-ribosyl)imidazole from N(2)-formyl-N(1)-(5-phospho-D-ribosyl)glycinamide: step 1/2. Part of the phosphoribosylformylglycinamidine synthase complex involved in the purines biosynthetic pathway. Catalyzes the ATP-dependent conversion of formylglycinamide ribonucleotide (FGAR) and glutamine to yield formylglycinamidine ribonucleotide (FGAM) and glutamate. The FGAM synthase complex is composed of three subunits. PurQ produces an ammonia molecule by converting glutamine to glutamate. PurL transfers the ammonia molecule to FGAR to form FGAM in an ATP-dependent manner. PurS interacts with PurQ and PurL and is thought to assist in the transfer of the ammonia molecule from PurQ to PurL. The protein is Phosphoribosylformylglycinamidine synthase subunit PurQ of Prochlorococcus marinus subsp. pastoris (strain CCMP1986 / NIES-2087 / MED4).